The sequence spans 273 residues: 2,3,4,5-tetrahydropyridine-2,6-dicarboxylate N-succinyltransferase (273 aa).

2 residues coordinate substrate: R104 and D141.

It belongs to the transferase hexapeptide repeat family. As to quaternary structure, homotrimer.

The protein resides in the cytoplasm. The enzyme catalyses (S)-2,3,4,5-tetrahydrodipicolinate + succinyl-CoA + H2O = (S)-2-succinylamino-6-oxoheptanedioate + CoA. Its pathway is amino-acid biosynthesis; L-lysine biosynthesis via DAP pathway; LL-2,6-diaminopimelate from (S)-tetrahydrodipicolinate (succinylase route): step 1/3. This Acinetobacter baylyi (strain ATCC 33305 / BD413 / ADP1) protein is 2,3,4,5-tetrahydropyridine-2,6-dicarboxylate N-succinyltransferase.